A 273-amino-acid polypeptide reads, in one-letter code: 4-hydroxy-tetrahydrodipicolinate reductase (273 aa).

Residues 11–16 (GAGGRM) and Glu36 each bind NAD(+). NADP(+) is bound at residue Arg37. NAD(+) is bound by residues 100–102 (GTT) and 124–127 (AANY). The Proton donor/acceptor role is filled by His157. His158 contributes to the (S)-2,3,4,5-tetrahydrodipicolinate binding site. The active-site Proton donor is Lys161. 167–168 (GT) contacts (S)-2,3,4,5-tetrahydrodipicolinate.

Belongs to the DapB family.

The protein localises to the cytoplasm. The enzyme catalyses (S)-2,3,4,5-tetrahydrodipicolinate + NAD(+) + H2O = (2S,4S)-4-hydroxy-2,3,4,5-tetrahydrodipicolinate + NADH + H(+). The catalysed reaction is (S)-2,3,4,5-tetrahydrodipicolinate + NADP(+) + H2O = (2S,4S)-4-hydroxy-2,3,4,5-tetrahydrodipicolinate + NADPH + H(+). Its pathway is amino-acid biosynthesis; L-lysine biosynthesis via DAP pathway; (S)-tetrahydrodipicolinate from L-aspartate: step 4/4. Its function is as follows. Catalyzes the conversion of 4-hydroxy-tetrahydrodipicolinate (HTPA) to tetrahydrodipicolinate. This chain is 4-hydroxy-tetrahydrodipicolinate reductase, found in Acinetobacter baumannii (strain ACICU).